The sequence spans 89 residues: Large ribosomal subunit protein uL23c (89 aa).

This sequence belongs to the universal ribosomal protein uL23 family. As to quaternary structure, part of the 50S ribosomal subunit.

The protein resides in the plastid. Its subcellular location is the chloroplast. Its function is as follows. Binds to 23S rRNA. This is Large ribosomal subunit protein uL23c (rpl23) from Zygnema circumcarinatum (Green alga).